Here is a 666-residue protein sequence, read N- to C-terminus: uncharacterized protein (666 aa).

It belongs to the MG032/MG096/MG288 family.

This is an uncharacterized protein from Mycoplasma genitalium (strain ATCC 33530 / DSM 19775 / NCTC 10195 / G37) (Mycoplasmoides genitalium).